The primary structure comprises 244 residues: Tyrosine recombinase XerD-like (244 aa).

A Core-binding (CB) domain is found at 1–73 (MRDRISAFLE…ACNQFLYFLY (73 aa)). The 155-residue stretch at 90-244 (AEKKTEKPEI…KTVLTLEKYR (155 aa)) folds into the Tyr recombinase domain. Catalysis depends on residues lysine 150 and arginine 211. Tyrosine 243 serves as the catalytic O-(3'-phospho-DNA)-tyrosine intermediate.

The protein belongs to the 'phage' integrase family. XerD-like subfamily.

It is found in the cytoplasm. Putative tyrosine recombinase. Not involved in the cutting and rejoining of the recombining DNA molecules on dif(SL) site. The polypeptide is Tyrosine recombinase XerD-like (Streptococcus pneumoniae (strain Hungary19A-6)).